The chain runs to 130 residues: Small ribosomal subunit protein uS8 (130 aa).

It belongs to the universal ribosomal protein uS8 family. Part of the 30S ribosomal subunit. Contacts proteins S5 and S12.

One of the primary rRNA binding proteins, it binds directly to 16S rRNA central domain where it helps coordinate assembly of the platform of the 30S subunit. In Pseudomonas entomophila (strain L48), this protein is Small ribosomal subunit protein uS8.